Consider the following 208-residue polypeptide: ATP synthase subunit b (208 aa).

Positions 1 to 27 are cleaved as a signal peptide; that stretch reads MVKAKKLVFKWSLLVFSFFTLSLFLVS. Cysteine 28 carries N-palmitoyl cysteine lipidation. Cysteine 28 carries the S-diacylglycerol cysteine lipid modification. Residues 49-69 traverse the membrane as a helical segment; sequence WVFITHLLAFFILLTLMIFLF.

This sequence belongs to the ATPase B chain family. In terms of assembly, F-type ATPases have 2 components, F(1) - the catalytic core - and F(0) - the membrane proton channel. F(1) has five subunits: alpha(3), beta(3), gamma(1), delta(1), epsilon(1). F(0) has three main subunits: a(1), b(2) and c(10-14). The alpha and beta chains form an alternating ring which encloses part of the gamma chain. F(1) is attached to F(0) by a central stalk formed by the gamma and epsilon chains, while a peripheral stalk is formed by the delta and b chains.

The protein localises to the cell membrane. Its function is as follows. F(1)F(0) ATP synthase produces ATP from ADP in the presence of a proton or sodium gradient. F-type ATPases consist of two structural domains, F(1) containing the extramembraneous catalytic core and F(0) containing the membrane proton channel, linked together by a central stalk and a peripheral stalk. During catalysis, ATP synthesis in the catalytic domain of F(1) is coupled via a rotary mechanism of the central stalk subunits to proton translocation. Functionally, component of the F(0) channel, it forms part of the peripheral stalk, linking F(1) to F(0). The polypeptide is ATP synthase subunit b (Mycoplasma genitalium (strain ATCC 33530 / DSM 19775 / NCTC 10195 / G37) (Mycoplasmoides genitalium)).